We begin with the raw amino-acid sequence, 273 residues long: MAIVKCKPTSPGRRHVVKVVNPELHKGKPYAPLLETLSKSGGRNNNGRITTRHIGGGHKQHYRLIDFKRNKDGIPAVVERLEYDPNRSANIALVLYKDGERRYILAPKGLKAGEQIQSGVDAAIKAGNALPMRNIPVGSTVHNVEMKPGKGGQLARSAGAYVQIVARDGAYVTLRLRSGEMRKIQSECRATLGEVGNAEHMLRVLGKAGASRWRGIRPTVRGTAMNPVDHPHGGGEGRNFGKHPVTPWGIQTKGKKTRSNKRTDKFIVRRRSK.

The interval Arg221–Lys273 is disordered.

This sequence belongs to the universal ribosomal protein uL2 family. As to quaternary structure, part of the 50S ribosomal subunit. Forms a bridge to the 30S subunit in the 70S ribosome.

In terms of biological role, one of the primary rRNA binding proteins. Required for association of the 30S and 50S subunits to form the 70S ribosome, for tRNA binding and peptide bond formation. It has been suggested to have peptidyltransferase activity; this is somewhat controversial. Makes several contacts with the 16S rRNA in the 70S ribosome. The protein is Large ribosomal subunit protein uL2 of Sodalis glossinidius (strain morsitans).